A 254-amino-acid chain; its full sequence is 5-oxoprolinase subunit A (254 aa).

This sequence belongs to the LamB/PxpA family. In terms of assembly, forms a complex composed of PxpA, PxpB and PxpC.

It carries out the reaction 5-oxo-L-proline + ATP + 2 H2O = L-glutamate + ADP + phosphate + H(+). Functionally, catalyzes the cleavage of 5-oxoproline to form L-glutamate coupled to the hydrolysis of ATP to ADP and inorganic phosphate. This Burkholderia lata (strain ATCC 17760 / DSM 23089 / LMG 22485 / NCIMB 9086 / R18194 / 383) protein is 5-oxoprolinase subunit A.